The sequence spans 271 residues: Bifunctional protein FolD (271 aa).

NADP(+) is bound by residues 154 to 156 (GRS), S181, and I222.

This sequence belongs to the tetrahydrofolate dehydrogenase/cyclohydrolase family. Homodimer.

It carries out the reaction (6R)-5,10-methylene-5,6,7,8-tetrahydrofolate + NADP(+) = (6R)-5,10-methenyltetrahydrofolate + NADPH. It catalyses the reaction (6R)-5,10-methenyltetrahydrofolate + H2O = (6R)-10-formyltetrahydrofolate + H(+). It functions in the pathway one-carbon metabolism; tetrahydrofolate interconversion. In terms of biological role, catalyzes the oxidation of 5,10-methylenetetrahydrofolate to 5,10-methenyltetrahydrofolate and then the hydrolysis of 5,10-methenyltetrahydrofolate to 10-formyltetrahydrofolate. This chain is Bifunctional protein FolD, found in Thermotoga maritima (strain ATCC 43589 / DSM 3109 / JCM 10099 / NBRC 100826 / MSB8).